Reading from the N-terminus, the 180-residue chain is Large ribosomal subunit protein uL5 (180 aa).

It belongs to the universal ribosomal protein uL5 family. As to quaternary structure, part of the 50S ribosomal subunit; part of the 5S rRNA/L5/L18/L25 subcomplex. Contacts the 5S rRNA and the P site tRNA. Forms a bridge to the 30S subunit in the 70S ribosome.

Its function is as follows. This is one of the proteins that bind and probably mediate the attachment of the 5S RNA into the large ribosomal subunit, where it forms part of the central protuberance. In the 70S ribosome it contacts protein S13 of the 30S subunit (bridge B1b), connecting the 2 subunits; this bridge is implicated in subunit movement. Contacts the P site tRNA; the 5S rRNA and some of its associated proteins might help stabilize positioning of ribosome-bound tRNAs. This is Large ribosomal subunit protein uL5 from Streptococcus thermophilus (strain ATCC BAA-491 / LMD-9).